A 201-amino-acid polypeptide reads, in one-letter code: Charged multivesicular body protein 6 (201 aa).

Gly-2 is lipidated: N-myristoyl glycine. Positions Gln-10–Ala-145 form a coiled coil. Position 119 is a phosphoserine (Ser-119). Position 130 is a phosphothreonine (Thr-130). The Type-2 MIT-interacting motif signature appears at Ile-168 to Pro-179. A disordered region spans residues Pro-171–Ser-201. Over residues Leu-178–Val-188 the composition is skewed to basic and acidic residues.

It belongs to the SNF7 family. As to quaternary structure, probable core component of the endosomal sorting required for transport complex III (ESCRT-III). ESCRT-III components are thought to multimerize to form a flat lattice on the perimeter membrane of the endosome. Several assembly forms of ESCRT-III may exist that interact and act sequentially. Interacts with VPS4A; the interaction is direct. Interacts with VPS4B; the interaction is direct. Interacts with CHMP4A, CHMP4B and CHMP4C. Interacts with SNF8, VPS25 and VPS36. In terms of processing, ISGylated in a CHMP5-dependent manner. Isgylation weakens its interaction with VPS4A.

The protein resides in the endomembrane system. It is found in the endosome membrane. Its subcellular location is the late endosome membrane. The protein localises to the membrane. Functionally, probable core component of the endosomal sorting required for transport complex III (ESCRT-III) which is involved in multivesicular bodies (MVBs) formation and sorting of endosomal cargo proteins into MVBs. MVBs contain intraluminal vesicles (ILVs) that are generated by invagination and scission from the limiting membrane of the endosome and mostly are delivered to lysosomes enabling degradation of membrane proteins, such as stimulated growth factor receptors, lysosomal enzymes and lipids. The MVB pathway appears to require the sequential function of ESCRT-O, -I,-II and -III complexes. ESCRT-III proteins mostly dissociate from the invaginating membrane before the ILV is released. The ESCRT machinery also functions in topologically equivalent membrane fission events, such as the terminal stages of cytokinesis and the budding of enveloped viruses (lentiviruses). ESCRT-III proteins are believed to mediate the necessary vesicle extrusion and/or membrane fission activities, possibly in conjunction with the AAA ATPase VPS4. In the ESCRT-III complex, it probably serves as an acceptor for the ESCRT-II complex on endosomal membrane. This chain is Charged multivesicular body protein 6 (CHMP6), found in Pongo abelii (Sumatran orangutan).